Reading from the N-terminus, the 441-residue chain is Glutamate--tRNA ligase 2 (441 aa).

A 'HIGH' region motif is present at residues 9-19 (PSPTGYIHVGN). The short motif at 239–243 (ALSKR) is the 'KMSKS' region element. Residue K242 coordinates ATP.

It belongs to the class-I aminoacyl-tRNA synthetase family. Glutamate--tRNA ligase type 1 subfamily. In terms of assembly, monomer.

It localises to the cytoplasm. The catalysed reaction is tRNA(Glu) + L-glutamate + ATP = L-glutamyl-tRNA(Glu) + AMP + diphosphate. Catalyzes the attachment of glutamate to tRNA(Glu) in a two-step reaction: glutamate is first activated by ATP to form Glu-AMP and then transferred to the acceptor end of tRNA(Glu). This chain is Glutamate--tRNA ligase 2, found in Cereibacter sphaeroides (strain ATCC 17023 / DSM 158 / JCM 6121 / CCUG 31486 / LMG 2827 / NBRC 12203 / NCIMB 8253 / ATH 2.4.1.) (Rhodobacter sphaeroides).